The sequence spans 479 residues: MSPQTETKASVGFKAGVKEYKLTYYTPEYETKDTDILAAFRVTPQPGVPPEEAGAAVAAESSTGTWTTVWTDGLTSLDRYKGRCYHIEPVPGETDQYICYVAYPLDLFEEGSVTNMFTSIVGNVFGFKALRALRLEDLRIPPAYIKTFQGPPHGIQVERDKLNKYGRPLLGCTIKPKLGLSAKNYGRAVYECLRGGLDFTKDDENVNSQPFMRWRDRFLFCAEAIYKSQAETGEIKGHYLNATAGTSEEMIKRAVFARELGVPIVMHDYLTGGFTANTSLAHYCRDNGLLLHIHRAMHAVIDRQKNHGIHFRVLAKALRMSGGDHIHSGTVVGKLEGERDITLGFVDLLRDDFIEKDRSRGIYFTQDWVSLPGVLPVASGGIHVWHMPALTEIFGDDSVLQFGGGTLGHPWGNAPGAVANRVALEACVKARNEGRDLASEGNVIIREAAKWSPELSAACEVWKEIRFDFKAVDTLDPEK.

A propeptide spanning residues 1-2 is cleaved from the precursor; the sequence is MS. Pro-3 is modified (N-acetylproline). Lys-14 bears the N6,N6,N6-trimethyllysine mark. Residues Asn-123 and Thr-173 each coordinate substrate. Lys-175 functions as the Proton acceptor in the catalytic mechanism. Lys-177 contacts substrate. Mg(2+) is bound by residues Lys-201, Asp-203, and Glu-204. Lys-201 carries the post-translational modification N6-carboxylysine. His-294 acts as the Proton acceptor in catalysis. Substrate is bound by residues Arg-295, His-327, and Ser-379.

The protein belongs to the RuBisCO large chain family. Type I subfamily. Heterohexadecamer of 8 large chains and 8 small chains. It depends on Mg(2+) as a cofactor.

The protein localises to the plastid. The protein resides in the chloroplast. It carries out the reaction 2 (2R)-3-phosphoglycerate + 2 H(+) = D-ribulose 1,5-bisphosphate + CO2 + H2O. The enzyme catalyses D-ribulose 1,5-bisphosphate + O2 = 2-phosphoglycolate + (2R)-3-phosphoglycerate + 2 H(+). In terms of biological role, ruBisCO catalyzes two reactions: the carboxylation of D-ribulose 1,5-bisphosphate, the primary event in carbon dioxide fixation, as well as the oxidative fragmentation of the pentose substrate in the photorespiration process. Both reactions occur simultaneously and in competition at the same active site. The sequence is that of Ribulose bisphosphate carboxylase large chain from Jasminum nudiflorum (Winter jasmine).